A 414-amino-acid polypeptide reads, in one-letter code: Serine hydroxymethyltransferase (414 aa).

Residues leucine 118 and 122–124 (GHL) contribute to the (6S)-5,6,7,8-tetrahydrofolate site. At lysine 226 the chain carries N6-(pyridoxal phosphate)lysine. Residue 353–355 (SPF) participates in (6S)-5,6,7,8-tetrahydrofolate binding.

It belongs to the SHMT family. As to quaternary structure, homodimer. Requires pyridoxal 5'-phosphate as cofactor.

It localises to the cytoplasm. It catalyses the reaction (6R)-5,10-methylene-5,6,7,8-tetrahydrofolate + glycine + H2O = (6S)-5,6,7,8-tetrahydrofolate + L-serine. It participates in one-carbon metabolism; tetrahydrofolate interconversion. Its pathway is amino-acid biosynthesis; glycine biosynthesis; glycine from L-serine: step 1/1. Functionally, catalyzes the reversible interconversion of serine and glycine with tetrahydrofolate (THF) serving as the one-carbon carrier. This reaction serves as the major source of one-carbon groups required for the biosynthesis of purines, thymidylate, methionine, and other important biomolecules. Also exhibits THF-independent aldolase activity toward beta-hydroxyamino acids, producing glycine and aldehydes, via a retro-aldol mechanism. This chain is Serine hydroxymethyltransferase, found in Blochmanniella floridana.